The chain runs to 132 residues: Interferon-induced transmembrane protein 5 (132 aa).

Residues 1–11 (MDTAYPREDTR) show a composition bias toward basic and acidic residues. The disordered stretch occupies residues 1–21 (MDTAYPREDTRAPTPSKAGAH). At 1–36 (MDTAYPREDTRAPTPSKAGAHTALTLGAPHPPPRDH) the chain is on the extracellular side. A helical transmembrane segment spans residues 37 to 57 (LIWSVFSTLYLNLCCLGFLAL). S-palmitoyl cysteine attachment occurs at residues cysteine 50, cysteine 51, and cysteine 84. At 58–86 (AYSIKARDQKVVGDLEAARRFGSKAKCYN) the chain is on the cytoplasmic side. A helical transmembrane segment spans residues 87–107 (ILAAMWTLVPPLLLLGLVVTG). At 108–132 (ALHLARLAKDSAAFFSTKFDDADYD) the chain is on the extracellular side.

Belongs to the CD225/Dispanin family. Interacts with FKBP11. In terms of processing, palmitoylated. Detected in osteoblasts and fibroblasts (at protein level). Detected in bone.

It localises to the cell membrane. Its function is as follows. Required for normal bone mineralization. This chain is Interferon-induced transmembrane protein 5 (IFITM5), found in Homo sapiens (Human).